The following is a 373-amino-acid chain: Glutamate 5-kinase (373 aa).

Lysine 15 lines the ATP pocket. Residues serine 55, aspartate 142, and asparagine 154 each coordinate substrate. ATP is bound by residues 174–175 (TD) and 216–222 (TGGMVTK). The PUA domain occupies 281–359 (SGRVIVDDGA…GEIEAILGYK (79 aa)).

This sequence belongs to the glutamate 5-kinase family.

It is found in the cytoplasm. The catalysed reaction is L-glutamate + ATP = L-glutamyl 5-phosphate + ADP. The protein operates within amino-acid biosynthesis; L-proline biosynthesis; L-glutamate 5-semialdehyde from L-glutamate: step 1/2. Catalyzes the transfer of a phosphate group to glutamate to form L-glutamate 5-phosphate. The sequence is that of Glutamate 5-kinase from Geobacter metallireducens (strain ATCC 53774 / DSM 7210 / GS-15).